Here is a 121-residue protein sequence, read N- to C-terminus: MPKHAKSARLLRVEGTIQREISEILVKEVSDPRLKDVTITGIDMTPDFSIAYVYWTIYSDLASSGEKADAGLQAAKGLIKRQLARKMTTFKIPDLIFKRDTAIEYGDHIEQLIAKLNHESK.

It belongs to the RbfA family. As to quaternary structure, monomer. Binds 30S ribosomal subunits, but not 50S ribosomal subunits or 70S ribosomes.

It localises to the cytoplasm. One of several proteins that assist in the late maturation steps of the functional core of the 30S ribosomal subunit. Associates with free 30S ribosomal subunits (but not with 30S subunits that are part of 70S ribosomes or polysomes). Required for efficient processing of 16S rRNA. May interact with the 5'-terminal helix region of 16S rRNA. The protein is Ribosome-binding factor A of Oenococcus oeni (strain ATCC BAA-331 / PSU-1).